A 231-amino-acid chain; its full sequence is Orotidine 5'-phosphate decarboxylase (231 aa).

Residues D12, K34, 61–70 (DLKFHDIPNT), T120, R181, Q190, G210, and R211 each bind substrate. The active-site Proton donor is K63.

This sequence belongs to the OMP decarboxylase family. Type 1 subfamily. In terms of assembly, homodimer.

It carries out the reaction orotidine 5'-phosphate + H(+) = UMP + CO2. Its pathway is pyrimidine metabolism; UMP biosynthesis via de novo pathway; UMP from orotate: step 2/2. In terms of biological role, catalyzes the decarboxylation of orotidine 5'-monophosphate (OMP) to uridine 5'-monophosphate (UMP). The polypeptide is Orotidine 5'-phosphate decarboxylase (Alcanivorax borkumensis (strain ATCC 700651 / DSM 11573 / NCIMB 13689 / SK2)).